The sequence spans 419 residues: Acyl-[acyl-carrier-protein] hydrolase FATB1, chloroplastic (419 aa).

The transit peptide at 1–50 (MVAAAATSAFFPVPAPGTSPKPGKSGNWPSSLSPTFKPKSIPNGGFQVKA) directs the protein to the chloroplast. Residues 1–84 (MVAAAATSAF…DTSSSPPPRA (84 aa)) are disordered. A compositionally biased stretch (polar residues) spans 61 to 78 (SAVNLKSGSLNTQEDTSS). Residues Asn-315, His-317, and Cys-352 contribute to the active site. A disordered region spans residues 390-419 (SRTEWRPKNAGTNGAISTSTAKTSNGNSVS). The span at 399–419 (AGTNGAISTSTAKTSNGNSVS) shows a compositional bias: polar residues.

This sequence belongs to the acyl-ACP thioesterase family.

The protein resides in the plastid. It localises to the chloroplast. It carries out the reaction octanoyl-[ACP] + H2O = octanoate + holo-[ACP] + H(+). The catalysed reaction is decanoyl-[ACP] + H2O = decanoate + holo-[ACP] + H(+). Plays an essential role in chain termination during de novo fatty acid synthesis. Possesses thioesterase activity for short chain acyl-ACPs. Substrate preference is 8:0 &gt; 10:0. In Cuphea viscosissima (Blue waxweed), this protein is Acyl-[acyl-carrier-protein] hydrolase FATB1, chloroplastic.